We begin with the raw amino-acid sequence, 91 residues long: MVSFNATAILLVLVANAFSKPLYVPEHCVGMSGTLFQACIRQTMVDTTGMYTNSAMSYDGTTIPFDRDGIVHQDHYTDTKPTPLSDVGFSV.

Positions 1–19 are cleaved as a signal peptide; the sequence is MVSFNATAILLVLVANAFS.

In Tylonycteris pachypus (Lesser bamboo bat), this protein is Non-structural protein 3a.